The primary structure comprises 232 residues: U2 small nuclear ribonucleoprotein B'' (232 aa).

Residues 10 to 89 (QTVYLRNLNE…KRMRVQYAKT (80 aa)) form the RRM 1 domain. A disordered region spans residues 90–159 (RSDCLATEDG…QEPPAPPNNI (70 aa)). A compositionally biased stretch (basic and acidic residues) spans 108–123 (KKQEEKAAEKKRRAEE). A compositionally biased stretch (polar residues) spans 127-151 (SGPNAAAQSNGTGYQASRLGKTSQE). The region spanning 158–232 (NILFIQNLPA…NPMAISYAKK (75 aa)) is the RRM 2 domain.

Belongs to the RRM U1 A/B'' family. As to quaternary structure, component of the spliceosome where it is associated with snRNP U2.

It localises to the nucleus. Its subcellular location is the cajal body. It is found in the nucleoplasm. The protein resides in the cytoplasm. Its function is as follows. Involved in nuclear pre-mRNA splicing. The polypeptide is U2 small nuclear ribonucleoprotein B'' (Oryza sativa subsp. japonica (Rice)).